Here is a 203-residue protein sequence, read N- to C-terminus: Probable NADPH:quinone oxidoreductase 2 (203 aa).

Belongs to the SsuE family. In terms of assembly, homotetramer. FMN is required as a cofactor.

The catalysed reaction is a quinone + NADH + H(+) = a quinol + NAD(+). The enzyme catalyses a quinone + NADPH + H(+) = a quinol + NADP(+). In terms of biological role, the enzyme apparently serves as a quinone reductase in connection with conjugation reactions of hydroquinones involved in detoxification pathways. The polypeptide is Probable NADPH:quinone oxidoreductase 2 (Oryza sativa subsp. japonica (Rice)).